A 174-amino-acid chain; its full sequence is Large ribosomal subunit protein uL18 (174 aa).

It belongs to the universal ribosomal protein uL18 family. As to quaternary structure, part of the 50S ribosomal subunit. Contacts the 5S and 23S rRNAs.

Its function is as follows. This is one of the proteins that bind and probably mediate the attachment of the 5S RNA into the large ribosomal subunit, where it forms part of the central protuberance. This chain is Large ribosomal subunit protein uL18, found in Methanoregula boonei (strain DSM 21154 / JCM 14090 / 6A8).